Here is a 326-residue protein sequence, read N- to C-terminus: Nucleoporin Nup37 (326 aa).

7 WD repeats span residues 6–54 (SRNA…FQEE), 61–109 (IQYK…LFTS), 115–154 (NEYK…IWNL), 159–195 (TAHF…FYDL), 199–237 (QAIL…IWDI), 242–282 (YPQN…QFQI), and 287–324 (HPQP…FWVT).

Component of the Nup107-160 subcomplex of the nuclear pore complex (NPC). The Nup107-160 subcomplex includes NUP160, NUP133, NUP107, NUP98, NUP85, NUP43, NUP37, SEH1 and SEC13.

The protein localises to the chromosome. The protein resides in the centromere. Its subcellular location is the kinetochore. It localises to the nucleus. It is found in the nuclear pore complex. Its function is as follows. Component of the Nup107-160 subcomplex of the nuclear pore complex (NPC). The Nup107-160 subcomplex is required for the assembly of a functional NPC. The Nup107-160 subcomplex is also required for normal kinetochore microtubule attachment, mitotic progression and chromosome segregation. This chain is Nucleoporin Nup37 (NUP37), found in Homo sapiens (Human).